The chain runs to 312 residues: Olfactory receptor 1D2 (312 aa).

Residues 1 to 25 lie on the Extracellular side of the membrane; the sequence is MDGGNQSEGSEFLLLGMSESPEQQR. Asn5 carries N-linked (GlcNAc...) asparagine glycosylation. Residues 26-49 form a helical membrane-spanning segment; the sequence is ILFWMFLSMYLVTVVGNVLIILAI. Topologically, residues 50–57 are cytoplasmic; the sequence is SSDSCLHT. A helical membrane pass occupies residues 58–79; sequence PMYFFLANLSFTDLFFVTNTIP. The Extracellular portion of the chain corresponds to 80-100; that stretch reads KMLVNLQSQNKAISYAGCLTQ. An intrachain disulfide couples Cys97 to Cys189. A helical transmembrane segment spans residues 101 to 120; that stretch reads LYFLVSLVALDNLILAVMAY. The Cytoplasmic segment spans residues 121–139; sequence DRYVAICCPLHYTTAMSPK. A helical transmembrane segment spans residues 140–158; sequence LCILLLSLCWVLSVLYGLI. Residues 159-196 are Extracellular-facing; it reads HTLLMTRVTFCGSRKIHYIFCEMYVLLRMACSNIQTNH. N-linked (GlcNAc...) asparagine glycosylation is present at Asn195. The helical transmembrane segment at 197–219 threads the bilayer; it reads TVLIATGCFIFLIPFGFVIISYV. Residues 220 to 236 are Cytoplasmic-facing; that stretch reads LIIRAILRIPSLSKKYK. A helical membrane pass occupies residues 237–259; the sequence is AFSTCASHLGAVSLFYGTLCMVY. At 260-271 the chain is on the extracellular side; sequence LKPLHTYSVKDS. A helical transmembrane segment spans residues 272–291; the sequence is VATVMYAVVTPMMNPFIYSL. Topologically, residues 292 to 312 are cytoplasmic; that stretch reads RNKDMHGALGRLLDKHFKRLT.

It belongs to the G-protein coupled receptor 1 family.

The protein resides in the cell membrane. Functionally, odorant receptor. The polypeptide is Olfactory receptor 1D2 (OR1D2) (Pan troglodytes (Chimpanzee)).